The primary structure comprises 326 residues: Aquaporin-4 (326 aa).

Topologically, residues 1–39 (MSDGAGAAARRWGKCGGRSCSRESIMVAFKGVWTQAFWK) are cytoplasmic. 2 S-palmitoyl cysteine lipidation sites follow: Cys-15 and Cys-20. The helical transmembrane segment at 40 to 60 (AVTAEFLAMLIFVLLSVGSTI) threads the bilayer. The Extracellular segment spans residues 61-72 (NWGGSENPLPVD). A helical transmembrane segment spans residues 73–92 (MVLISLCFGLSIATMVQCFG). Residues 93-96 (HISG) lie on the Cytoplasmic side of the membrane. Residues 97-104 (GHINPAVT) constitute an intramembrane region (discontinuously helical). An NPA 1 motif is present at residues 100 to 102 (NPA). Residues 105-118 (VAMVCTRKISIAKS) are Cytoplasmic-facing. A Phosphoserine; by PKG modification is found at Ser-114. The chain crosses the membrane as a helical span at residues 119–139 (VFYITAQCLGAIIGAGILYLV). At 140–158 (TPPNVVGGLGVTTVHGNLT) the chain is on the extracellular side. A glycan (N-linked (GlcNAc...) asparagine) is linked at Asn-156. Residues 159 to 179 (AGHGLLVELIITFQLVFTIFA) traverse the membrane as a helical segment. Topologically, residues 180 to 187 (SCDSKRTD) are cytoplasmic. Ser-183 is subject to Phosphoserine; by PKC. A helical transmembrane segment spans residues 188–208 (VTGSIALAIGFSVAIGHLFAI). Asn-209 carries an N-linked (GlcNAc...) asparagine glycan. Over 209 to 211 (NYT) the chain is Extracellular. An intramembrane region (discontinuously helical) is located at residues 212 to 225 (GASMNPARSFGPAV). An NPA 2 motif is present at residues 216–218 (NPA). Over 226–234 (IMGNWENHW) the chain is Extracellular. Residues 235–255 (IYWVGPIIGAVLAGALYEYVF) traverse the membrane as a helical segment. Residues 256 to 326 (CPDVELKRRL…DSAGEVLSSV (71 aa)) lie on the Cytoplasmic side of the membrane. Phosphoserine is present on residues Ser-279 and Ser-288. Thr-292 carries the phosphothreonine modification. Position 324 is a phosphoserine (Ser-324).

The protein belongs to the MIP/aquaporin (TC 1.A.8) family. Homotetramer. The tetramers can form oligomeric arrays in membranes. The size of the oligomers differs between tissues and is smaller in skeletal muscle than in brain. Interaction between AQP4 oligomeric arrays in close-by cells can contribute to cell-cell adhesion. Part of a complex containing MLC1, TRPV4, HEPACAM and ATP1B1. Phosphorylation by PKC at Ser-183 reduces conductance by 50%. Phosphorylation by PKG at Ser-114 in response to glutamate increases conductance by 40%. In terms of processing, isoform Long: Palmitoylated on its N-terminal region.

It is found in the cell membrane. The protein localises to the basolateral cell membrane. It localises to the endosome membrane. The protein resides in the sarcolemma. Its subcellular location is the cell projection. The catalysed reaction is H2O(in) = H2O(out). Its function is as follows. Forms a water-specific channel. Plays an important role in brain water homeostasis and in glymphatic solute transport. Required for a normal rate of water exchange across the blood brain interface. Required for normal levels of cerebrospinal fluid influx into the brain cortex and parenchyma along paravascular spaces that surround penetrating arteries, and for normal drainage of interstitial fluid along paravenous drainage pathways. Thereby, it is required for normal clearance of solutes from the brain interstitial fluid, including soluble beta-amyloid peptides derived from APP. Plays a redundant role in urinary water homeostasis and urinary concentrating ability. The polypeptide is Aquaporin-4 (AQP4) (Notomys alexis (Spinifex hopping mouse)).